Reading from the N-terminus, the 178-residue chain is Peptide deformylase (178 aa).

2 residues coordinate Fe cation: Cys102 and His144. Glu145 is an active-site residue. Fe cation is bound at residue His148.

The protein belongs to the polypeptide deformylase family. The cofactor is Fe(2+).

The enzyme catalyses N-terminal N-formyl-L-methionyl-[peptide] + H2O = N-terminal L-methionyl-[peptide] + formate. In terms of biological role, removes the formyl group from the N-terminal Met of newly synthesized proteins. Requires at least a dipeptide for an efficient rate of reaction. N-terminal L-methionine is a prerequisite for activity but the enzyme has broad specificity at other positions. This Leptospira borgpetersenii serovar Hardjo-bovis (strain JB197) protein is Peptide deformylase.